A 549-amino-acid polypeptide reads, in one-letter code: Movement protein Hsp70h (549 aa).

It belongs to the heat shock protein 70 family.

The protein resides in the virion. Transports viral genome to neighboring plant cells directly through plasmosdesmata, without any budding. The movement protein allows efficient cell to cell propagation, by bypassing the host cell wall barrier. Two movement proteins, p6, Hsp70h and three structural proteins, CP, CPm, and P64 are essential for cell-cell movement. Also plays a role in virion formation. Together with CPm and p64, encapsidates the 5'-terminal portion of the viral genome. This is Movement protein Hsp70h from Vitis vinifera (Grape).